The following is a 145-amino-acid chain: Succinate dehydrogenase assembly factor 2, mitochondrial (145 aa).

This sequence belongs to the SDHAF2 family. In terms of assembly, interacts with the flavoprotein subunit within the SDH catalytic dimer.

The protein resides in the mitochondrion matrix. Its function is as follows. Plays an essential role in the assembly of succinate dehydrogenase (SDH), an enzyme complex (also referred to as respiratory complex II) that is a component of both the tricarboxylic acid (TCA) cycle and the mitochondrial electron transport chain, and which couples the oxidation of succinate to fumarate with the reduction of ubiquinone (coenzyme Q) to ubiquinol. Required for flavinylation (covalent attachment of FAD) of the flavoprotein subunit of the SDH catalytic dimer. This is Succinate dehydrogenase assembly factor 2, mitochondrial from Yarrowia lipolytica (strain CLIB 122 / E 150) (Yeast).